The chain runs to 70 residues: Protein SlyX homolog (70 aa).

Belongs to the SlyX family.

The sequence is that of Protein SlyX homolog from Shewanella sediminis (strain HAW-EB3).